The following is a 273-amino-acid chain: MAINLYKTSIPSTRKGAVDSQVKSNPRNNLIYGQHRCGKGRNARGIITAGHRGGGHKRLYRKIDFRRNDKDISGRIVTIEYDPNRNAYICLIHYGDGEKRYILHPRGAIIGDTIVSGTEVPISMGNALPLTDMPLGTAIHNIEITLEKGGQLARAAGAVSKLIAKEGKSATLRLPSGEVRLISKNCSATVGQVGNVEVNQKSLGRAGSKCWLGKRPVVRGVVMNPVDHPHGGGEGRAPIGRKKPATPWGYPALGRRSRKRNKYSDRFILRRRK.

The disordered stretch occupies residues 224 to 273 (NPVDHPHGGGEGRAPIGRKKPATPWGYPALGRRSRKRNKYSDRFILRRRK). Residues 262-273 (KYSDRFILRRRK) are compositionally biased toward basic and acidic residues.

It belongs to the universal ribosomal protein uL2 family. Part of the 50S ribosomal subunit.

The protein localises to the plastid. The protein resides in the chloroplast. The protein is Large ribosomal subunit protein uL2cz/uL2cy (rpl2-A) of Piper cenocladum (Ant piper).